We begin with the raw amino-acid sequence, 830 residues long: uncharacterized protein (830 aa).

Residues Met1–Val12 are compositionally biased toward basic and acidic residues. The segment at Met1–Thr61 is disordered. Residues Ala15 to Val25 show a composition bias toward polar residues. Residues Thr249–Asn433 form the Helicase ATP-binding domain. Asp262–Thr269 is a binding site for ATP. The DEAH box motif lies at Asp384–His387. The region spanning Glu662–Thr816 is the Helicase C-terminal domain. Phosphoserine is present on Ser712.

This sequence belongs to the SNF2/RAD54 helicase family.

The protein resides in the nucleus. This is an uncharacterized protein from Schizosaccharomyces pombe (strain 972 / ATCC 24843) (Fission yeast).